The sequence spans 607 residues: Large ribosomal subunit assembly factor BipA (607 aa).

Residues Glu3–Asp198 enclose the tr-type G domain. Residues Asp15–Thr20 and Asn128–Asp131 each bind GTP.

The protein belongs to the TRAFAC class translation factor GTPase superfamily. Classic translation factor GTPase family. BipA subfamily. Monomer.

It is found in the cytoplasm. The enzyme catalyses GTP + H2O = GDP + phosphate + H(+). In terms of biological role, a 50S ribosomal subunit assembly protein with GTPase activity, required for 50S subunit assembly at low temperatures, may also play a role in translation. Binds GTP and analogs. Binds the 70S ribosome between the 30S and 50S subunits, in a similar position as ribosome-bound EF-G; it contacts a number of ribosomal proteins, both rRNAs and the A-site tRNA. The protein is Large ribosomal subunit assembly factor BipA of Shigella flexneri.